Here is a 529-residue protein sequence, read N- to C-terminus: Zinc metalloproteinase MspA (529 aa).

An N-terminal signal peptide occupies residues 1–24 (MHHNYYLSPLAVALALGMVSPAKA). A propeptide spanning residues 25 to 204 (ADPILLQNAS…PFVQWNDIKT (180 aa)) is cleaved from the precursor. H365 contributes to the Zn(2+) binding site. The active site involves E366. The Zn(2+) site is built by H369 and E389. The active-site Proton donor is the H451.

The protein belongs to the peptidase M4 family. Zn(2+) serves as cofactor.

The polypeptide is Zinc metalloproteinase MspA (mspA) (Legionella longbeachae).